The primary structure comprises 304 residues: Coenzyme PQQ synthesis protein B (304 aa).

Belongs to the PqqB family.

It functions in the pathway cofactor biosynthesis; pyrroloquinoline quinone biosynthesis. May be involved in the transport of PQQ or its precursor to the periplasm. The sequence is that of Coenzyme PQQ synthesis protein B from Stutzerimonas stutzeri (Pseudomonas stutzeri).